We begin with the raw amino-acid sequence, 407 residues long: Carbamoyl phosphate synthase small chain (407 aa).

Residues 1 to 205 (MTETTPKTAP…LQDGYGEQDA (205 aa)) are CPSase. Serine 60, glycine 257, and glycine 259 together coordinate L-glutamine. The Glutamine amidotransferase type-1 domain maps to 209 to 397 (HVVALDFGVK…INLIRERKGQ (189 aa)). Cysteine 286 (nucleophile) is an active-site residue. L-glutamine-binding residues include leucine 287, glutamine 290, asparagine 328, glycine 330, and phenylalanine 331. Active-site residues include histidine 370 and glutamate 372.

The protein belongs to the CarA family. As to quaternary structure, composed of two chains; the small (or glutamine) chain promotes the hydrolysis of glutamine to ammonia, which is used by the large (or ammonia) chain to synthesize carbamoyl phosphate. Tetramer of heterodimers (alpha,beta)4.

It carries out the reaction hydrogencarbonate + L-glutamine + 2 ATP + H2O = carbamoyl phosphate + L-glutamate + 2 ADP + phosphate + 2 H(+). It catalyses the reaction L-glutamine + H2O = L-glutamate + NH4(+). It functions in the pathway amino-acid biosynthesis; L-arginine biosynthesis; carbamoyl phosphate from bicarbonate: step 1/1. Its pathway is pyrimidine metabolism; UMP biosynthesis via de novo pathway; (S)-dihydroorotate from bicarbonate: step 1/3. Its function is as follows. Small subunit of the glutamine-dependent carbamoyl phosphate synthetase (CPSase). CPSase catalyzes the formation of carbamoyl phosphate from the ammonia moiety of glutamine, carbonate, and phosphate donated by ATP, constituting the first step of 2 biosynthetic pathways, one leading to arginine and/or urea and the other to pyrimidine nucleotides. The small subunit (glutamine amidotransferase) binds and cleaves glutamine to supply the large subunit with the substrate ammonia. This chain is Carbamoyl phosphate synthase small chain, found in Brucella abortus (strain S19).